A 238-amino-acid polypeptide reads, in one-letter code: Lactate utilization protein A (238 aa).

Belongs to the LutA/YkgE family.

Its function is as follows. Is involved in L-lactate degradation and allows cells to grow with lactate as the sole carbon source. This Geobacillus sp. (strain WCH70) protein is Lactate utilization protein A.